The primary structure comprises 190 residues: Putative histone H1.6 (190 aa).

Positions 1-29 (MSDVAVAETPAVKTPTKAPKANATKVPKV) are disordered. The residue at position 2 (Ser-2) is an N-acetylserine. A compositionally biased stretch (low complexity) spans 9-29 (TPAVKTPTKAPKANATKVPKV). In terms of domain architecture, H15 spans 34–110 (AHPPFINMVT…GATGRFRVAE (77 aa)). Residues 141–190 (KKTGDKVKKAKSPKKIAKPAAKKATKSPSKKVAPKKAAAKPAKKTAALKA) form a disordered region. A compositionally biased stretch (basic residues) spans 148–183 (KKAKSPKKIAKPAAKKATKSPSKKVAPKKAAAKPAK).

The protein belongs to the histone H1/H5 family.

Its subcellular location is the nucleus. The protein localises to the chromosome. In terms of biological role, histones H1 are necessary for the condensation of nucleosome chains into higher-order structures. The protein is Putative histone H1.6 (hil-6) of Caenorhabditis elegans.